The following is a 692-amino-acid chain: Meiotic sister-chromatid recombination protein 6, mitochondrial (692 aa).

Residues 1–30 (MLSHNALRAFDCSKVIISRRCLTSSTSIYQ) constitute a mitochondrion transit peptide.

The protein resides in the mitochondrion. May be involved in the control of meiotic sister-chromatid recombination. The sequence is that of Meiotic sister-chromatid recombination protein 6, mitochondrial (MSC6) from Saccharomyces cerevisiae (strain ATCC 204508 / S288c) (Baker's yeast).